A 363-amino-acid polypeptide reads, in one-letter code: MSRPQFDPSAYAAQLEDKKSRLAGLLAPFAAPAPEVFESPREHYRLRAEFRLWRETGNEKRHYAMFEQGDKHTPILIEDFPIASRRINELMPRLKAAWADPALGFKLFQVEFLTTLAGDALITLCYHRPIDDAWRQAAEKLAAELGVNLVGRSRGKRIVVGRDYVEEELSVAGRRFRYRQPEGAFTQPNGEVNQKMLGWAYEALGQRDDDLLELYCGNGNFTLPLATRVRKVLATEISKSSVNAALANLADNAVDNVSLVRLSAEELTQALNEVRPFRRLADIDLKSYAFGSVFVDPPRAGMDPDTCELARRFERILYISCNPETLAQNIAQLHDTHRISRCALFDQFPYTHHMESGVLLERR.

Residues Gln-187, Tyr-215, Asn-220, Glu-236, and Asp-296 each contribute to the S-adenosyl-L-methionine site. The active-site Nucleophile is Cys-321. Catalysis depends on Glu-355, which acts as the Proton acceptor.

Belongs to the class I-like SAM-binding methyltransferase superfamily. RNA M5U methyltransferase family. TrmA subfamily.

It carries out the reaction uridine(54) in tRNA + S-adenosyl-L-methionine = 5-methyluridine(54) in tRNA + S-adenosyl-L-homocysteine + H(+). It catalyses the reaction uridine(341) in tmRNA + S-adenosyl-L-methionine = 5-methyluridine(341) in tmRNA + S-adenosyl-L-homocysteine + H(+). Functionally, dual-specificity methyltransferase that catalyzes the formation of 5-methyluridine at position 54 (m5U54) in all tRNAs, and that of position 341 (m5U341) in tmRNA (transfer-mRNA). This chain is tRNA/tmRNA (uracil-C(5))-methyltransferase, found in Pseudomonas aeruginosa (strain LESB58).